We begin with the raw amino-acid sequence, 347 residues long: 4-hydroxy-2-oxovalerate aldolase (347 aa).

In terms of domain architecture, Pyruvate carboxyltransferase spans 2-252 (ILISDATLRD…DTRTTFEHVM (251 aa)). 10–11 (RD) contributes to the substrate binding site. Asp-11 serves as a coordination point for Mn(2+). The Proton acceptor role is filled by His-14. Residues Ser-164 and His-191 each contribute to the substrate site. Mn(2+) contacts are provided by His-191 and His-193.

It belongs to the 4-hydroxy-2-oxovalerate aldolase family.

It carries out the reaction (S)-4-hydroxy-2-oxopentanoate = acetaldehyde + pyruvate. This is 4-hydroxy-2-oxovalerate aldolase (mhpE) from Burkholderia thailandensis (strain ATCC 700388 / DSM 13276 / CCUG 48851 / CIP 106301 / E264).